The sequence spans 497 residues: Probable polyamine oxidase 4 (497 aa).

FAD is bound by residues glutamate 58, arginine 66, valine 247, and glutamate 435. The short motif at 495–497 is the Microbody targeting signal element; sequence SRM.

This sequence belongs to the flavin monoamine oxidase family. The cofactor is FAD. In terms of tissue distribution, highly expressed in roots, flowers and greening cotelydons. Lower expression in other tissues.

The protein localises to the peroxisome. The enzyme catalyses spermine + O2 + H2O = 3-aminopropanal + spermidine + H2O2. The catalysed reaction is spermidine + O2 + H2O = 3-aminopropanal + putrescine + H2O2. It functions in the pathway amine and polyamine degradation; spermine degradation. It participates in amine and polyamine degradation; spermidine degradation. Its function is as follows. Flavoenzyme involved in polyamine back-conversion. Catalyzes the oxidation of the secondary amino group of polyamines, such as spermine and spermidine. Substrate preference is spermine &gt; spermidine. No activity detected when putrescine or N(1)-acetylspermine are used as substrates. Plays an important role in the regulation of polyamine intracellular concentration. The sequence is that of Probable polyamine oxidase 4 (PAO4) from Arabidopsis thaliana (Mouse-ear cress).